Consider the following 354-residue polypeptide: UDP-N-acetylglucosamine--N-acetylmuramyl-(pentapeptide) pyrophosphoryl-undecaprenol N-acetylglucosamine transferase (354 aa).

UDP-N-acetyl-alpha-D-glucosamine is bound by residues 13–15 (SGG), asparagine 125, serine 189, isoleucine 242, 261–266 (ALTVSE), and glutamine 286.

This sequence belongs to the glycosyltransferase 28 family. MurG subfamily.

Its subcellular location is the cell inner membrane. The catalysed reaction is di-trans,octa-cis-undecaprenyl diphospho-N-acetyl-alpha-D-muramoyl-L-alanyl-D-glutamyl-meso-2,6-diaminopimeloyl-D-alanyl-D-alanine + UDP-N-acetyl-alpha-D-glucosamine = di-trans,octa-cis-undecaprenyl diphospho-[N-acetyl-alpha-D-glucosaminyl-(1-&gt;4)]-N-acetyl-alpha-D-muramoyl-L-alanyl-D-glutamyl-meso-2,6-diaminopimeloyl-D-alanyl-D-alanine + UDP + H(+). Its pathway is cell wall biogenesis; peptidoglycan biosynthesis. Cell wall formation. Catalyzes the transfer of a GlcNAc subunit on undecaprenyl-pyrophosphoryl-MurNAc-pentapeptide (lipid intermediate I) to form undecaprenyl-pyrophosphoryl-MurNAc-(pentapeptide)GlcNAc (lipid intermediate II). The chain is UDP-N-acetylglucosamine--N-acetylmuramyl-(pentapeptide) pyrophosphoryl-undecaprenol N-acetylglucosamine transferase from Buchnera aphidicola subsp. Acyrthosiphon pisum (strain APS) (Acyrthosiphon pisum symbiotic bacterium).